A 65-amino-acid polypeptide reads, in one-letter code: Large ribosomal subunit protein bL35 (65 aa).

Belongs to the bacterial ribosomal protein bL35 family.

The polypeptide is Large ribosomal subunit protein bL35 (Borrelia duttonii (strain Ly)).